The primary structure comprises 162 residues: ATP synthase subunit b (162 aa).

A helical transmembrane segment spans residues 16-36 (GISGGTIIYQLLMFIILLALL).

The protein belongs to the ATPase B chain family. In terms of assembly, F-type ATPases have 2 components, F(1) - the catalytic core - and F(0) - the membrane proton channel. F(1) has five subunits: alpha(3), beta(3), gamma(1), delta(1), epsilon(1). F(0) has three main subunits: a(1), b(2) and c(10-14). The alpha and beta chains form an alternating ring which encloses part of the gamma chain. F(1) is attached to F(0) by a central stalk formed by the gamma and epsilon chains, while a peripheral stalk is formed by the delta and b chains.

The protein localises to the cell membrane. In terms of biological role, f(1)F(0) ATP synthase produces ATP from ADP in the presence of a proton or sodium gradient. F-type ATPases consist of two structural domains, F(1) containing the extramembraneous catalytic core and F(0) containing the membrane proton channel, linked together by a central stalk and a peripheral stalk. During catalysis, ATP synthesis in the catalytic domain of F(1) is coupled via a rotary mechanism of the central stalk subunits to proton translocation. Its function is as follows. Component of the F(0) channel, it forms part of the peripheral stalk, linking F(1) to F(0). The polypeptide is ATP synthase subunit b (Bacillus caldotenax).